The sequence spans 291 residues: ATP synthase gamma chain (291 aa).

Belongs to the ATPase gamma chain family. F-type ATPases have 2 components, CF(1) - the catalytic core - and CF(0) - the membrane proton channel. CF(1) has five subunits: alpha(3), beta(3), gamma(1), delta(1), epsilon(1). CF(0) has three main subunits: a, b and c.

It is found in the cell inner membrane. Produces ATP from ADP in the presence of a proton gradient across the membrane. The gamma chain is believed to be important in regulating ATPase activity and the flow of protons through the CF(0) complex. This chain is ATP synthase gamma chain, found in Nitratidesulfovibrio vulgaris (strain ATCC 29579 / DSM 644 / CCUG 34227 / NCIMB 8303 / VKM B-1760 / Hildenborough) (Desulfovibrio vulgaris).